We begin with the raw amino-acid sequence, 232 residues long: Octanoyltransferase (232 aa).

Residues 40 to 226 form the BPL/LPL catalytic domain; sequence GSAPERVWLL…TWQDLFGSVP (187 aa). Substrate contacts are provided by residues 79–86, 157–159, and 170–172; these read RGGQWTYH, ALG, and GVA. Cys-188 serves as the catalytic Acyl-thioester intermediate.

The protein belongs to the LipB family.

Its subcellular location is the cytoplasm. It carries out the reaction octanoyl-[ACP] + L-lysyl-[protein] = N(6)-octanoyl-L-lysyl-[protein] + holo-[ACP] + H(+). Its pathway is protein modification; protein lipoylation via endogenous pathway; protein N(6)-(lipoyl)lysine from octanoyl-[acyl-carrier-protein]: step 1/2. Functionally, catalyzes the transfer of endogenously produced octanoic acid from octanoyl-acyl-carrier-protein onto the lipoyl domains of lipoate-dependent enzymes. Lipoyl-ACP can also act as a substrate although octanoyl-ACP is likely to be the physiological substrate. This chain is Octanoyltransferase, found in Gluconacetobacter diazotrophicus (strain ATCC 49037 / DSM 5601 / CCUG 37298 / CIP 103539 / LMG 7603 / PAl5).